A 124-amino-acid polypeptide reads, in one-letter code: Putative ankyrin repeat protein RF_1087 (124 aa).

ANK repeat units follow at residues 17 to 46 (NDQKLLHLAIRAGYKNIVEYLLKKGANPNI), 50 to 79 (NGETTLHFAAMNGCVRTIECLIKSGAIIDS), and 83 to 112 (FERTPLELAINSGNTDAVKLFLQYEATIGN).

The sequence is that of Putative ankyrin repeat protein RF_1087 from Rickettsia felis (strain ATCC VR-1525 / URRWXCal2) (Rickettsia azadi).